The sequence spans 937 residues: Lysosomal alpha-glucosidase (937 aa).

The signal sequence occupies residues 1–23 (MMRWPPCSRPLLGVCTLLSLALL). A propeptide spanning residues 24 to 60 (GHILLHDLEVVPRELRGFSQDEIHQACQPGASSPECR) is cleaved from the precursor. One can recognise a P-type domain in the interval 68-118 (TQCDLPPNSRFDCAPDKGITPQQCEARGCCYMPAEWPPDAQMGQPWCFFPP). 3 disulfide bridges follow: cysteine 70–cysteine 97, cysteine 80–cysteine 96, and cysteine 91–cysteine 114. 4 N-linked (GlcNAc...) asparagine glycosylation sites follow: asparagine 127, asparagine 220, asparagine 259, and asparagine 377. Residue aspartate 391 coordinates substrate. N-linked (GlcNAc...) asparagine glycosylation is present at asparagine 457. Aspartate 505 serves as the catalytic Nucleophile. Glutamate 508 is an active-site residue. Cysteines 520 and 545 form a disulfide. Residues arginine 587 and aspartate 603 each contribute to the substrate site. Cysteine 634 and cysteine 645 are oxidised to a cystine. N-linked (GlcNAc...) asparagine glycosylation is present at asparagine 639. Substrate is bound at residue histidine 661. N-linked (GlcNAc...) asparagine glycosylation is found at asparagine 867, asparagine 888, and asparagine 910.

It belongs to the glycosyl hydrolase 31 family.

The protein resides in the lysosome. It localises to the lysosome membrane. It catalyses the reaction Hydrolysis of terminal, non-reducing (1-&gt;4)-linked alpha-D-glucose residues with release of alpha-D-glucose.. In terms of biological role, essential for the degradation of glycogen in lysosomes. Has highest activity on alpha-1,4-linked glycosidic linkages, but can also hydrolyze alpha-1,6-linked glucans. The sequence is that of Lysosomal alpha-glucosidase (GAA) from Bos taurus (Bovine).